The sequence spans 41 residues: Minor histocompatibility protein HB-1 (41 aa).

The interval 9–17 (EEKRGSLHV) is loss of recognition by cytotoxic T lymphocyte (CTL).

In terms of assembly, HB-1 forms a complex with MHC class I HLA-B44. As to expression, expressed in acute lymphoblastic leukemia B-cells and Epstein-Barr virus-transformed B-cells.

Precursor of the histocomplatibility antigen HB-1. More generally, minor histocomplatibility antigens (mHags) refer to immunogenic peptide which, when complexed with MHC, can generate an immune response after recognition by specific T-cells. The peptides are derived from polymorphic intracellular proteins, which are cleaved by normal pathways of antigen processing. The binding of these peptides to MHC class I or class II molecules and its expression on the cell surface can stimulate T-cell responses and thereby trigger graft rejection or graft-versus-host disease (GVHD) after hematopoietic stem cell transplantation from HLA-identical sibling donor. GVHD is a frequent complication after bone marrow transplantation (BMT), due to mismatch of minor histocomplatibility antigen in HLA-matched sibling marrow transplants. HB-1 is presented on the cell surface by MHC class I HLA-B44. This complex specifically elicits donor-cytotoxic T lymphocyte (CTL) reactivity in B-cell acute lymphoblastic leukemia (B-ALL) after treatment by HLA-identical allogenic bone marrow transplantation (BMT). It induces cell recognition and lysis by CTL. However, HB-1 restricted expression in B-ALL cells and not in normal tissues may allow a specific CTL reactivity against B-ALL without the risk of evoking graft-versus-host disease. This Homo sapiens (Human) protein is Minor histocompatibility protein HB-1 (HMHB1).